Here is a 465-residue protein sequence, read N- to C-terminus: Cruciform DNA-recognizing protein 1 (465 aa).

Disordered regions lie at residues 107-227 (EAGG…VPNP) and 247-276 (RLNK…ALPQ). Residues 127-151 (NRKKNKRNNKKRRSKLKKKSTKNNK) show a composition bias toward basic residues. Residues serine 153 and serine 156 each carry the phosphoserine modification. The segment covering 156-165 (SLDDNEEEDG) has biased composition (acidic residues). The interval 160 to 161 (NE) is X-DNA-binding. Positions 166–177 (VTGTTTEDVTGT) are enriched in low complexity. Residue threonine 182 is modified to Phosphothreonine. At serine 271 the chain carries Phosphoserine. Threonine 295 carries the phosphothreonine modification. Residues 300 to 465 (AVTPLINEPE…FFGKLKKLFK (166 aa)) are disordered. 2 positions are modified to phosphoserine: serine 319 and serine 343. Positions 337 to 363 (LVEKRESTEGVLDGSKKVENKAKKDEE) are enriched in basic and acidic residues. Position 366 is a phosphothreonine (threonine 366). Basic and acidic residues-rich tracts occupy residues 385-398 (AEGR…EEKE) and 404-428 (EKGS…EVKK). Serine 394 carries the phosphoserine modification. A Phosphoserine modification is found at serine 440. Residues 451 to 465 (KKKTGFFGKLKKLFK) show a composition bias toward basic residues.

This sequence belongs to the CRP1/MDG1 family. In terms of processing, cleaved in the vicinity of position 160 to give an X-DNA-binding N-terminal subpeptide and a non-DNA-binding C-terminal subpeptide.

Cruciform DNA-binding protein which exerts an enhancing effect on the cleavage of cruciform DNA (X-DNA) by endonuclease VII from bacteriophage T4. In Saccharomyces cerevisiae (strain ATCC 204508 / S288c) (Baker's yeast), this protein is Cruciform DNA-recognizing protein 1 (CRP1).